The following is a 466-amino-acid chain: Methylenetetrahydrofolate--tRNA-(uracil-5-)-methyltransferase TrmFO (466 aa).

Residue 10 to 15 participates in FAD binding; sequence GGGLAG.

It belongs to the MnmG family. TrmFO subfamily. FAD serves as cofactor.

It localises to the cytoplasm. It catalyses the reaction uridine(54) in tRNA + (6R)-5,10-methylene-5,6,7,8-tetrahydrofolate + NADH + H(+) = 5-methyluridine(54) in tRNA + (6S)-5,6,7,8-tetrahydrofolate + NAD(+). The enzyme catalyses uridine(54) in tRNA + (6R)-5,10-methylene-5,6,7,8-tetrahydrofolate + NADPH + H(+) = 5-methyluridine(54) in tRNA + (6S)-5,6,7,8-tetrahydrofolate + NADP(+). Its function is as follows. Catalyzes the folate-dependent formation of 5-methyl-uridine at position 54 (M-5-U54) in all tRNAs. The protein is Methylenetetrahydrofolate--tRNA-(uracil-5-)-methyltransferase TrmFO of Phenylobacterium zucineum (strain HLK1).